A 283-amino-acid polypeptide reads, in one-letter code: Shikimate dehydrogenase (NADP(+)) (283 aa).

Shikimate is bound by residues 16–18 and threonine 63; that span reads SLS. Lysine 67 acts as the Proton acceptor in catalysis. Aspartate 79 is a binding site for NADP(+). The shikimate site is built by asparagine 88 and aspartate 103. Residues 128-132 and glycine 243 contribute to the NADP(+) site; that span reads GAGGA.

Belongs to the shikimate dehydrogenase family. Homodimer.

The catalysed reaction is shikimate + NADP(+) = 3-dehydroshikimate + NADPH + H(+). It functions in the pathway metabolic intermediate biosynthesis; chorismate biosynthesis; chorismate from D-erythrose 4-phosphate and phosphoenolpyruvate: step 4/7. Involved in the biosynthesis of the chorismate, which leads to the biosynthesis of aromatic amino acids. Catalyzes the reversible NADPH linked reduction of 3-dehydroshikimate (DHSA) to yield shikimate (SA). This is Shikimate dehydrogenase (NADP(+)) from Xanthomonas euvesicatoria pv. vesicatoria (strain 85-10) (Xanthomonas campestris pv. vesicatoria).